The chain runs to 419 residues: Serine hydroxymethyltransferase (419 aa).

Residues Leu-121 and 125–127 (GHL) contribute to the (6S)-5,6,7,8-tetrahydrofolate site. Lys-230 bears the N6-(pyridoxal phosphate)lysine mark.

This sequence belongs to the SHMT family. In terms of assembly, homodimer. Pyridoxal 5'-phosphate is required as a cofactor.

Its subcellular location is the cytoplasm. It carries out the reaction (6R)-5,10-methylene-5,6,7,8-tetrahydrofolate + glycine + H2O = (6S)-5,6,7,8-tetrahydrofolate + L-serine. The protein operates within one-carbon metabolism; tetrahydrofolate interconversion. It participates in amino-acid biosynthesis; glycine biosynthesis; glycine from L-serine: step 1/1. Its function is as follows. Catalyzes the reversible interconversion of serine and glycine with tetrahydrofolate (THF) serving as the one-carbon carrier. This reaction serves as the major source of one-carbon groups required for the biosynthesis of purines, thymidylate, methionine, and other important biomolecules. Also exhibits THF-independent aldolase activity toward beta-hydroxyamino acids, producing glycine and aldehydes, via a retro-aldol mechanism. This chain is Serine hydroxymethyltransferase, found in Vesicomyosocius okutanii subsp. Calyptogena okutanii (strain HA).